Consider the following 220-residue polypeptide: Guanylate kinase (220 aa).

The 180-residue stretch at 16–195 folds into the Guanylate kinase-like domain; that stretch reads GLMFVLSSPS…AFESVKAILR (180 aa). 23-30 is an ATP binding site; sequence SPSGAGKT.

Belongs to the guanylate kinase family.

It localises to the cytoplasm. It carries out the reaction GMP + ATP = GDP + ADP. Functionally, essential for recycling GMP and indirectly, cGMP. The sequence is that of Guanylate kinase from Rhodopseudomonas palustris (strain HaA2).